The primary structure comprises 478 residues: Sulfate adenylyltransferase subunit 1 (478 aa).

Residues Lys24 to Asp240 form the tr-type G domain. The segment at Gly33 to Ser40 is G1. Gly33 to Ser40 is a binding site for GTP. The G2 stretch occupies residues Gly91–Asp95. The interval Asp112 to Gly115 is G3. Residues Asp112–His116 and Asn167–Asp170 contribute to the GTP site. The tract at residues Asn167–Asp170 is G4. The segment at Ser206–Leu208 is G5.

The protein belongs to the TRAFAC class translation factor GTPase superfamily. Classic translation factor GTPase family. CysN/NodQ subfamily. As to quaternary structure, heterodimer composed of CysD, the smaller subunit, and CysN.

It catalyses the reaction sulfate + ATP + H(+) = adenosine 5'-phosphosulfate + diphosphate. It participates in sulfur metabolism; hydrogen sulfide biosynthesis; sulfite from sulfate: step 1/3. In terms of biological role, with CysD forms the ATP sulfurylase (ATPS) that catalyzes the adenylation of sulfate producing adenosine 5'-phosphosulfate (APS) and diphosphate, the first enzymatic step in sulfur assimilation pathway. APS synthesis involves the formation of a high-energy phosphoric-sulfuric acid anhydride bond driven by GTP hydrolysis by CysN coupled to ATP hydrolysis by CysD. This chain is Sulfate adenylyltransferase subunit 1, found in Aliivibrio fischeri (strain ATCC 700601 / ES114) (Vibrio fischeri).